The chain runs to 854 residues: DNA mismatch repair protein MutS (854 aa).

Residue 615 to 622 coordinates ATP; sequence GPNMGGKS.

The protein belongs to the DNA mismatch repair MutS family.

Its function is as follows. This protein is involved in the repair of mismatches in DNA. It is possible that it carries out the mismatch recognition step. This protein has a weak ATPase activity. In Aliivibrio fischeri (strain ATCC 700601 / ES114) (Vibrio fischeri), this protein is DNA mismatch repair protein MutS.